The primary structure comprises 753 residues: MALNSEVMFREQINAMRSQAGRKRATSLQSFCSGNTDDSSADSTDNMDMMVDYPQQKGVSCMRARFNSESTLSKSFRKKVKKLAQKDRRSKERLNGNSEEDAIEVPRGAPSTYAAPSKLRKSKALDCLVSEKPKDEGRREDSGHGADIEMAKGHFNNVRMKVFAARTAMQVEPALVMKTRKALEMKNAVLENHQSPGAFSLHAAYKIAASAESRVGSITPCNKKVTKEAMANLIRSSYDDTEITQELLFSSKFDTKWKGRYTDIYMRRDENGKKPKRPVNGQGWVMPLKSICEKFGINSTFFTNHRIDLKSARDQVLLMRLLSHDQTSTWISDIHPEAVKNETMAEYLLRELDASTMQKRVQAFKANVLADRDRVRVAGQFYNNIRIGKRMFGAARKAKYLSTIIGGMERRFEILENSVNHIPFTHSASDNNQEKCRNPRVHCKDSTRIALQFPRGQYLGDFIHANRISGKPLFNEFIMTQAPMKNTVDDFWRMVWQEEVPYIVMLTSRKEPERCEYYWPKSPSDPAVTVPGGLRIENFGVYQAPDPLFRVTHLRLIGPDREERHVEHWQGDVNNSSNMYSPLNILRLLRNASKPVVIHDHLGVSRAACLVAAEIAICSLLRGPTYKYPVQRAVQFLRQRRPFSIETPMQYIFVHRLVAFFFRDVIGSAKELDVDYERWLQERSERMFLDDLAAPIPGYRLLSPRADPDIVRMVGRPERPNYRREAPDCVGEMPNKVATVDGILSPAKSVFEF.

Disordered stretches follow at residues 26–46 (TSLQSFCSGNTDDSSADSTDN) and 75–145 (SFRK…SGHG). Over residues 35-46 (NTDDSSADSTDN) the composition is skewed to low complexity. Basic and acidic residues-rich tracts occupy residues 84-94 (AQKDRRSKERL) and 129-145 (VSEKPKDEGRREDSGHG). The region spanning 408–661 (MERRFEILEN…IFVHRLVAFF (254 aa)) is the Tyrosine-protein phosphatase domain.

This sequence belongs to the protein-tyrosine phosphatase family. In terms of assembly, part of a complex, consisting of pseudophosphatases egg-3, egg-4, egg-5 and kinase mbk-2; this complex is required for the oocyte-to-zygote transition. Interacts (via tyrosine-protein phosphatase domain) with kinase mbk-2 (via 'Tyr-619' and 'Tyr-621'); mbk-2 tyrosine phosphorylation enhances the interaction. The interaction inhibits mbk-2 kinase activity and is required for mbk-2 oocyte cortex localization. Interacts with egg-3.

It is found in the cytoplasm. The protein localises to the cell cortex. Functionally, inactive phosphatase which acts redundantly with egg-5 in the oocyte-to-zygote transition. Required for the polarization of cortical actin cytoskeleton rearrangement in the oocyte before and after fertilization. Together with egg-5, required for the cortical localization of kinase mbk-2 and for the inhibition of mbk-2 kinase activity in maturing oocyte until the end of meiosis I. Also required for kinase mbk-2, pseudophosphatase egg-3 and chitin synthase chs-1 localization to cytoplasmic foci after fertilization. The polypeptide is Inactive protein-tyrosine phosphatase egg-4 (Caenorhabditis elegans).